The primary structure comprises 198 residues: Protein-L-isoaspartate O-methyltransferase (198 aa).

Residue S50 is part of the active site.

It belongs to the methyltransferase superfamily. L-isoaspartyl/D-aspartyl protein methyltransferase family.

The protein resides in the cytoplasm. It catalyses the reaction [protein]-L-isoaspartate + S-adenosyl-L-methionine = [protein]-L-isoaspartate alpha-methyl ester + S-adenosyl-L-homocysteine. In terms of biological role, catalyzes the methyl esterification of L-isoaspartyl residues in peptides and proteins that result from spontaneous decomposition of normal L-aspartyl and L-asparaginyl residues. It plays a role in the repair and/or degradation of damaged proteins. In Thermosipho melanesiensis (strain DSM 12029 / CIP 104789 / BI429), this protein is Protein-L-isoaspartate O-methyltransferase.